We begin with the raw amino-acid sequence, 470 residues long: Dynein axonemal assembly factor 11 (470 aa).

LRR repeat units follow at residues 20 to 43 (IFSL…DKWC), 44 to 65 (RELK…VSKL), 66 to 89 (KKLE…GCES), and 90 to 110 (LQKL…NSLQ). The LRRCT domain maps to 128 to 146 (YEGYRQYVVATLPQLKWLD). The stretch at 177 to 288 (LRKRAAEREK…NRSEEELKKK (112 aa)) forms a coiled coil. The tract at residues 182–265 (AEREKATNNL…SQYTPESRLE (84 aa)) is disordered. Positions 194-213 (KQKEGRKAQEKKPGFDRRWY) are enriched in basic and acidic residues. Positions 303–395 (VNESKLDFSL…TEMIQTKRAK (93 aa)) constitute a CS domain. The tract at residues 447–470 (HRNSARDTADSEDFIDNAEVPPLV) is disordered.

It belongs to the tilB family.

The protein resides in the cytoplasm. It localises to the cell projection. Its subcellular location is the cilium. The protein localises to the dynein axonemal particle. It is found in the flagellum. Its function is as follows. Involved in dynein arm assembly, is important for expression and transporting outer dynein arm (ODA) proteins from the cytoplasm to the cilia. The chain is Dynein axonemal assembly factor 11 (dnaaf11) from Xenopus tropicalis (Western clawed frog).